The chain runs to 348 residues: Uroporphyrinogen decarboxylase (348 aa).

Residues 28–32 (RQAGR), Asp78, Tyr154, Thr209, and His325 contribute to the substrate site.

The protein belongs to the uroporphyrinogen decarboxylase family. Homodimer.

The protein resides in the cytoplasm. It carries out the reaction uroporphyrinogen III + 4 H(+) = coproporphyrinogen III + 4 CO2. It functions in the pathway porphyrin-containing compound metabolism; protoporphyrin-IX biosynthesis; coproporphyrinogen-III from 5-aminolevulinate: step 4/4. Catalyzes the decarboxylation of four acetate groups of uroporphyrinogen-III to yield coproporphyrinogen-III. The chain is Uroporphyrinogen decarboxylase from Rhodopseudomonas palustris (strain BisB5).